A 240-amino-acid polypeptide reads, in one-letter code: Transmembrane emp24 domain-containing protein 6 (240 aa).

Residues 1–21 form the signal peptide; it reads MSPLLFGAGLVVLNLVTSARS. Over 22 to 200 the chain is Lumenal; that stretch reads QKTEPLSGSG…FFLIQSNYNY (179 aa). Residues 53–138 form the GOLD domain; sequence TECFWQFAHQ…SVQVYLNFGV (86 aa). Residues Asn-107 and Asn-156 are each glycosylated (N-linked (GlcNAc...) asparagine). Residues 201-223 form a helical membrane-spanning segment; it reads VNWWSTAQSLVIILSGILQLYFL. At 224–240 the chain is on the cytoplasmic side; the sequence is KRLFNVPTTTDTKKPRC.

This sequence belongs to the EMP24/GP25L family.

It is found in the endoplasmic reticulum membrane. This Homo sapiens (Human) protein is Transmembrane emp24 domain-containing protein 6 (TMED6).